Consider the following 354-residue polypeptide: Guanine nucleotide-binding protein G(o) subunit alpha (354 aa).

Gly2 carries the N-myristoyl glycine lipid modification. Cys3 is lipidated: S-palmitoyl cysteine. Residues 32 to 354 (KDVKLLLLGA…ANNLRGCGLY (323 aa)) form the G-alpha domain. Residues 35-48 (KLLLLGAGESGKST) form a G1 motif region. Positions 43, 46, 47, 48, 152, 176, 177, 178, and 179 each coordinate GTP. A Mg(2+)-binding site is contributed by Ser47. Residues 174 to 182 (DILRTRVKT) form a G2 motif region. Thr182 serves as a coordination point for Mg(2+). Positions 197–206 (FRLFDVGGQR) are G3 motif. A 5-glutamyl histamine modification is found at Gln205. The segment at 266-273 (ILFLNKKD) is G4 motif. Residues Asn270, Asp273, and Cys325 each coordinate GTP. The G5 motif stretch occupies residues 324–329 (TCATDT). The S-palmitoyl cysteine moiety is linked to residue Cys351.

This sequence belongs to the G-alpha family. G(i/o/t/z) subfamily. As to quaternary structure, g proteins are composed of 3 units; alpha, beta and gamma. The alpha chain contains the guanine nucleotide binding site. Forms a complex with GNB1 and GNG3. Interacts with RGS14. Interacts with RGS16. Interacts with RGS19. Interacts (when palmitoylated) with ADGRG3. In terms of processing, histaminylated at Gln-205 residues by TGM2.

The protein resides in the cell membrane. Its subcellular location is the membrane. It catalyses the reaction GTP + H2O = GDP + phosphate + H(+). Its activity is regulated as follows. The GTPase activity is promoted by GTPAse activators, such as RGS14, RGS16 and RGS19. Guanine nucleotide-binding proteins (G proteins) function as transducers downstream of G protein-coupled receptors (GPCRs) in numerous signaling cascades. The alpha chain contains the guanine nucleotide binding site and alternates between an active, GTP-bound state and an inactive, GDP-bound state. Signaling by an activated GPCR promotes GDP release and GTP binding. The alpha subunit has a low GTPase activity that converts bound GTP to GDP, thereby terminating the signal. Both GDP release and GTP hydrolysis are modulated by numerous regulatory proteins. Signaling is mediated via effector proteins, such as adenylate cyclase. Inhibits adenylate cyclase activity, leading to decreased intracellular cAMP levels. This chain is Guanine nucleotide-binding protein G(o) subunit alpha (Gnao1), found in Mus musculus (Mouse).